A 498-amino-acid polypeptide reads, in one-letter code: Glycerol kinase (498 aa).

ADP is bound at residue threonine 12. 3 residues coordinate ATP: threonine 12, threonine 13, and serine 14. Residue threonine 12 coordinates sn-glycerol 3-phosphate. Position 16 (arginine 16) interacts with ADP. Positions 82, 83, 135, and 245 each coordinate sn-glycerol 3-phosphate. Glycerol-binding residues include arginine 82, glutamate 83, tyrosine 135, aspartate 245, and glutamine 246. ADP is bound by residues threonine 267 and glycine 310. Threonine 267, glycine 310, glutamine 314, and glycine 411 together coordinate ATP. Residues glycine 411 and asparagine 415 each contribute to the ADP site.

Belongs to the FGGY kinase family. In terms of assembly, homotetramer and homodimer (in equilibrium).

It carries out the reaction glycerol + ATP = sn-glycerol 3-phosphate + ADP + H(+). Its pathway is polyol metabolism; glycerol degradation via glycerol kinase pathway; sn-glycerol 3-phosphate from glycerol: step 1/1. Its activity is regulated as follows. Activated by phosphorylation and inhibited by fructose 1,6-bisphosphate (FBP). Its function is as follows. Key enzyme in the regulation of glycerol uptake and metabolism. Catalyzes the phosphorylation of glycerol to yield sn-glycerol 3-phosphate. This chain is Glycerol kinase, found in Clostridium botulinum (strain Eklund 17B / Type B).